Reading from the N-terminus, the 125-residue chain is MRVLASHKHERTAQAIKEAVAAIISREVKDPRLGFVSVTKVDLARDLSQAKIYISVYGSEEDKKNSFIALNSAKGFIKGELASRVRLRIMPELYFVEDPSIEYGARIMEILEGLKKEAGENESES.

It belongs to the RbfA family. In terms of assembly, monomer. Binds 30S ribosomal subunits, but not 50S ribosomal subunits or 70S ribosomes.

The protein localises to the cytoplasm. In terms of biological role, one of several proteins that assist in the late maturation steps of the functional core of the 30S ribosomal subunit. Associates with free 30S ribosomal subunits (but not with 30S subunits that are part of 70S ribosomes or polysomes). Required for efficient processing of 16S rRNA. May interact with the 5'-terminal helix region of 16S rRNA. The protein is Ribosome-binding factor A of Carboxydothermus hydrogenoformans (strain ATCC BAA-161 / DSM 6008 / Z-2901).